Here is a 702-residue protein sequence, read N- to C-terminus: MADS-box MEF2 type transcription factor MIG1 (702 aa).

An MADS-box domain is found at Met1–Asp61. Disordered regions lie at residues Gly73–Thr608 and Pro658–Ser702. Positions Gly86–Asp96 are enriched in acidic residues. The span at Ala132–Pro144 shows a compositional bias: pro residues. Residues His145 to Pro155 show a composition bias toward low complexity. A compositionally biased stretch (polar residues) spans Gly180–Met195. The span at Thr201–Pro241 shows a compositional bias: pro residues. Composition is skewed to low complexity over residues Pro273–Pro284, Glu326–Glu343, and Glu350–Pro371. Over residues Val456–Glu465 the composition is skewed to polar residues. Low complexity-rich tracts occupy residues Arg487–Ala512 and Asp530–Ser553. A compositionally biased stretch (polar residues) spans Gln554–Met567. Residues Pro587 to Pro600 show a composition bias toward pro residues. Positions Asn693 to Ser702 are enriched in basic and acidic residues.

It belongs to the MEF2 family. As to quaternary structure, interacts with MAPK MPS1.

It localises to the nucleus. Its function is as follows. Transcription factor acting downstream of the MPS1 MAP kinase (MAPK) cascade during conidiation and plant infection. Required for overcoming plant defense responses and the differentiation of secondary infectious hyphae in live plant cells. This Pyricularia oryzae (strain 70-15 / ATCC MYA-4617 / FGSC 8958) (Rice blast fungus) protein is MADS-box MEF2 type transcription factor MIG1.